A 1280-amino-acid polypeptide reads, in one-letter code: Rho guanine nucleotide exchange factor 10-like protein (1280 aa).

A compositionally biased stretch (pro residues) spans 1 to 10 (MASSNPPPQP). The interval 1-94 (MASSNPPPQP…TEAPTVVSNG (94 aa)) is disordered. Residues 26-46 (EVEEDSGEAFEFDDSDEEEDT) show a composition bias toward acidic residues. Position 40 is a phosphoserine (serine 40). Over residues 78–89 (PAAAPPQTEAPT) the composition is skewed to low complexity. A phosphotyrosine mark is found at tyrosine 131 and tyrosine 152. The tract at residues 161-202 (PRETEDLGWSSSEFESYSEDSGEETKPEAEPTKHRGSFQPKL) is disordered. Residues 183–193 (EETKPEAEPTK) show a composition bias toward basic and acidic residues. Serine 279 carries the phosphoserine modification. The region spanning 314–501 (VRRHILGSIV…ETLAEKLNEQ (188 aa)) is the DH domain. Disordered stretches follow at residues 1133–1163 (QEEA…HTAR) and 1186–1207 (PLLS…SEED).

In terms of assembly, interacts with RHOA, RHOB and RHOC.

The protein resides in the cytoplasm. Its function is as follows. Acts as a guanine nucleotide exchange factor (GEF) for RHOA, RHOB and RHOC. The chain is Rho guanine nucleotide exchange factor 10-like protein (Arhgef10l) from Mus musculus (Mouse).